The chain runs to 333 residues: L-lactate dehydrogenase B chain (333 aa).

NAD(+)-binding positions include 29 to 57 (GQVG…WEDK) and Arg-99. Arg-106, Asn-138, and Arg-169 together coordinate substrate. Residue Asn-138 coordinates NAD(+). His-193 serves as the catalytic Proton acceptor. Thr-248 lines the substrate pocket.

This sequence belongs to the LDH/MDH superfamily. LDH family. Homotetramer.

It is found in the cytoplasm. It catalyses the reaction (S)-lactate + NAD(+) = pyruvate + NADH + H(+). It functions in the pathway fermentation; pyruvate fermentation to lactate; (S)-lactate from pyruvate: step 1/1. In terms of biological role, interconverts simultaneously and stereospecifically pyruvate and lactate with concomitant interconversion of NADH and NAD(+). The protein is L-lactate dehydrogenase B chain (LDHB) of Alligator mississippiensis (American alligator).